Here is a 348-residue protein sequence, read N- to C-terminus: Dihydroorotate dehydrogenase (quinone) (348 aa).

FMN-binding positions include 60-64 and Thr-84; that span reads AGFDK. Lys-64 is a binding site for substrate. 109–113 serves as a coordination point for substrate; it reads NRLGF. Residues Asn-138 and Asn-169 each coordinate FMN. Asn-169 is a substrate binding site. Ser-172 serves as the catalytic Nucleophile. Residue Asn-174 participates in substrate binding. FMN-binding residues include Lys-207 and Ser-235. Residue 236–237 coordinates substrate; sequence NT. Residues Gly-258, Gly-287, and 308–309 contribute to the FMN site; that span reads YS.

The protein belongs to the dihydroorotate dehydrogenase family. Type 2 subfamily. Monomer. Requires FMN as cofactor.

The protein localises to the cell membrane. The catalysed reaction is (S)-dihydroorotate + a quinone = orotate + a quinol. It functions in the pathway pyrimidine metabolism; UMP biosynthesis via de novo pathway; orotate from (S)-dihydroorotate (quinone route): step 1/1. Catalyzes the conversion of dihydroorotate to orotate with quinone as electron acceptor. This is Dihydroorotate dehydrogenase (quinone) from Parvibaculum lavamentivorans (strain DS-1 / DSM 13023 / NCIMB 13966).